A 780-amino-acid chain; its full sequence is Striatin (780 aa).

Residues 53–120 adopt a coiled-coil conformation; the sequence is LHFLQHEWAR…QERAKYHKLK (68 aa). A caveolin-binding region spans residues 55–63; the sequence is FLQHEWARF. A disordered region spans residues 124–150; it reads ELNQGDMKPPSYDSDEGNETEVQPQQN. Residue S137 is modified to Phosphoserine. Residues 149–166 form a calmodulin-binding region; sequence QNSQLMWKQGRQLLRQYL. At T225 the chain carries Phosphothreonine. S227, S229, S245, and S259 each carry phosphoserine. Disordered stretches follow at residues 289-310 and 365-387; these read DFLV…GTDW and DELP…RLPE. Over residues 299 to 310 the composition is skewed to basic and acidic residues; sequence NESRSAGDGTDW. WD repeat units follow at residues 461 to 500, 514 to 553, 567 to 606, 662 to 701, 704 to 743, and 750 to 780; these read SHFD…PAKK, AHKG…IDPY, GHTD…PALS, NSSC…LIHS, AHLE…CIQE, and KFEE…KVFV.

It belongs to the WD repeat striatin family. In terms of assembly, part of the core of STRIPAK complexes composed of PP2A catalytic and scaffolding subunits, the striatins (PP2A regulatory subunits), the striatin-associated proteins MOB4, STRIP1 and STRIP2, PDCD10 and members of the STE20 kinases, such as STK24 and STK26. Interacts with CTTNBP2; this interaction may regulate dendritic spine distribution of STRN. Activation of glutamate receptors weakens the interaction with CTTNBP2. In terms of tissue distribution, preferentially expressed in brain.

It localises to the cytoplasm. It is found in the membrane. Its subcellular location is the cell projection. The protein resides in the dendritic spine. Functionally, calmodulin-binding scaffolding protein which is the center of the striatin-interacting phosphatase and kinase (STRIPAK) complexes. STRIPAK complexes have critical roles in protein (de)phosphorylation and are regulators of multiple signaling pathways including Hippo, MAPK, nuclear receptor and cytoskeleton remodeling. Different types of STRIPAK complexes are involved in a variety of biological processes such as cell growth, differentiation, apoptosis, metabolism and immune regulation. The chain is Striatin (STRN) from Homo sapiens (Human).